A 229-amino-acid chain; its full sequence is PKHD-type hydroxylase RPD_3334 (229 aa).

The region spanning 78–180 is the Fe2OG dioxygenase domain; that stretch reads QIFPPLFNRY…RVASFFWLQS (103 aa). Fe cation-binding residues include His98, Asp100, and His161. Residue Arg171 participates in 2-oxoglutarate binding.

The cofactor is Fe(2+). L-ascorbate is required as a cofactor.

This chain is PKHD-type hydroxylase RPD_3334, found in Rhodopseudomonas palustris (strain BisB5).